We begin with the raw amino-acid sequence, 700 residues long: Elongation factor G (700 aa).

Residues 8-290 (ERYRNIGISA…GVIDFMPSPI (283 aa)) form the tr-type G domain. GTP-binding positions include 17–24 (AHIDAGKT), 88–92 (DTPGH), and 142–145 (NKMD).

This sequence belongs to the TRAFAC class translation factor GTPase superfamily. Classic translation factor GTPase family. EF-G/EF-2 subfamily.

The protein resides in the cytoplasm. Catalyzes the GTP-dependent ribosomal translocation step during translation elongation. During this step, the ribosome changes from the pre-translocational (PRE) to the post-translocational (POST) state as the newly formed A-site-bound peptidyl-tRNA and P-site-bound deacylated tRNA move to the P and E sites, respectively. Catalyzes the coordinated movement of the two tRNA molecules, the mRNA and conformational changes in the ribosome. This is Elongation factor G from Methylibium petroleiphilum (strain ATCC BAA-1232 / LMG 22953 / PM1).